The following is a 339-amino-acid chain: Diacylglycerol acyltransferase/mycolyltransferase Ag85A (339 aa).

The first 43 residues, 1-43 (MKLVDRFRGAVTGMPRRLMVGAVGAALLSGLVGFVGGSATASA), serve as a signal peptide directing secretion. Substrate is bound at residue 85 to 86 (MR). Residues 101 to 111 (FEWYNQSGISV) form a fibronectin-binding region. An intrachain disulfide couples cysteine 130 to cysteine 135. Residues serine 169 and aspartate 197 each contribute to the substrate site. Residue serine 169 is the Nucleophile of the active site. Residue glutamate 272 is part of the active site. Substrate is bound by residues 274-277 (FVRT), lysine 281, and 304-306 (HDW). Histidine 304 is an active-site residue.

Belongs to the mycobacterial A85 antigen family. As to quaternary structure, homodimer.

The protein resides in the secreted. It localises to the cell wall. It is found in the cytoplasm. It catalyses the reaction an acyl-CoA + a 1,2-diacyl-sn-glycerol = a triacyl-sn-glycerol + CoA. The catalysed reaction is 2 alpha,alpha'-trehalose 6-mycolate = alpha,alpha'-trehalose 6,6'-bismycolate + alpha,alpha-trehalose. Functionally, the antigen 85 proteins (FbpA, FbpB, FbpC) are responsible for the high affinity of mycobacteria for fibronectin, a large adhesive glycoprotein, which facilitates the attachment of M.tuberculosis to murine alveolar macrophages (AMs). They also help to maintain the integrity of the cell wall by catalyzing the transfer of mycolic acids to cell wall arabinogalactan, and through the synthesis of alpha,alpha-trehalose dimycolate (TDM, cord factor). They catalyze the transfer of a mycoloyl residue from one molecule of alpha,alpha-trehalose monomycolate (TMM) to another TMM, leading to the formation of TDM. FbpA mediates triacylglycerol (TAG) formation with long-chain acyl-CoA as the acyl donor and 1,2-dipalmitoyl-sn-glycerol (1,2-dipalmitin) as the acyl acceptor. It has a preference for C26:0-CoA over C18:1-CoA. The chain is Diacylglycerol acyltransferase/mycolyltransferase Ag85A (fbpA) from Mycobacterium gordonae.